Reading from the N-terminus, the 86-residue chain is Small ribosomal subunit protein bS20 (86 aa).

A disordered region spans residues 1 to 27 (MANNKSAKKRAIQAEKRRQHNASRRSM).

Belongs to the bacterial ribosomal protein bS20 family.

Functionally, binds directly to 16S ribosomal RNA. In Vibrio cholerae serotype O1 (strain ATCC 39541 / Classical Ogawa 395 / O395), this protein is Small ribosomal subunit protein bS20.